A 195-amino-acid polypeptide reads, in one-letter code: Envelope glycoprotein L (195 aa).

An N-terminal signal peptide occupies residues 1–25 (MKIYRVLVHLSFVLGMFTKTNTVLA). Residues 28-157 (KYDLVHGFMR…LIAPADISCY (130 aa)) form an interaction with gH region. The region spanning 28–195 (KYDLVHGFMR…TTSGSRRANA (168 aa)) is the gL alphaherpesvirus-type domain. 2 disulfides stabilise this stretch: C49/C78 and C156/C178.

This sequence belongs to the herpesviridae glycoprotein L (gL) family. Alphaherpesvirinae gL subfamily. Interacts with glycoprotein H (gH); this interaction is necessary for the correct processing and cell surface expression of gH. The heterodimer gH/gL seems to interact with gB trimers during fusion.

The protein resides in the virion membrane. Its subcellular location is the host cell membrane. It is found in the host Golgi apparatus. The protein localises to the host trans-Golgi network. Its function is as follows. The heterodimer glycoprotein H-glycoprotein L is required for the fusion of viral and plasma membranes leading to virus entry into the host cell. Acts as a functional inhibitor of gH and maintains gH in an inhibited form. Upon binding to host integrins, gL dissociates from gH leading to activation of the viral fusion glycoproteins gB and gH. In Gallus gallus (Chicken), this protein is Envelope glycoprotein L.